Here is a 466-residue protein sequence, read N- to C-terminus: 3-isopropylmalate dehydratase large subunit (466 aa).

The [4Fe-4S] cluster site is built by Cys347, Cys407, and Cys410.

Belongs to the aconitase/IPM isomerase family. LeuC type 1 subfamily. As to quaternary structure, heterodimer of LeuC and LeuD. [4Fe-4S] cluster serves as cofactor.

The enzyme catalyses (2R,3S)-3-isopropylmalate = (2S)-2-isopropylmalate. It functions in the pathway amino-acid biosynthesis; L-leucine biosynthesis; L-leucine from 3-methyl-2-oxobutanoate: step 2/4. Functionally, catalyzes the isomerization between 2-isopropylmalate and 3-isopropylmalate, via the formation of 2-isopropylmaleate. In Pseudoalteromonas translucida (strain TAC 125), this protein is 3-isopropylmalate dehydratase large subunit.